The primary structure comprises 168 residues: G/U mismatch-specific DNA glycosylase (168 aa).

Belongs to the uracil-DNA glycosylase (UDG) superfamily. TDG/mug family. In terms of assembly, binds DNA as a monomer.

It localises to the cytoplasm. It catalyses the reaction Specifically hydrolyzes mismatched double-stranded DNA and polynucleotides, releasing free uracil.. Functionally, excises ethenocytosine and uracil, which can arise by alkylation or deamination of cytosine, respectively, from the corresponding mispairs with guanine in ds-DNA. It is capable of hydrolyzing the carbon-nitrogen bond between the sugar-phosphate backbone of the DNA and the mispaired base. The complementary strand guanine functions in substrate recognition. Required for DNA damage lesion repair in stationary-phase cells. The polypeptide is G/U mismatch-specific DNA glycosylase (Escherichia coli O139:H28 (strain E24377A / ETEC)).